A 200-amino-acid polypeptide reads, in one-letter code: Anthranilate synthase component 2 (200 aa).

The Glutamine amidotransferase type-1 domain occupies 3–196; that stretch reads NILLLDNIDS…IHWASLKYIT (194 aa). An L-glutamine-binding site is contributed by 57–59; that stretch reads GPS. Cys-84 (nucleophile; for GATase activity) is an active-site residue. Residues Gln-88 and 134-135 contribute to the L-glutamine site; that span reads SL. Active-site for GATase activity residues include His-170 and Glu-172.

In terms of assembly, heterotetramer consisting of two non-identical subunits: a beta subunit (TrpG) and a large alpha subunit (TrpE).

It carries out the reaction chorismate + L-glutamine = anthranilate + pyruvate + L-glutamate + H(+). The protein operates within amino-acid biosynthesis; L-tryptophan biosynthesis; L-tryptophan from chorismate: step 1/5. Its function is as follows. Part of a heterotetrameric complex that catalyzes the two-step biosynthesis of anthranilate, an intermediate in the biosynthesis of L-tryptophan. In the first step, the glutamine-binding beta subunit (TrpG) of anthranilate synthase (AS) provides the glutamine amidotransferase activity which generates ammonia as a substrate that, along with chorismate, is used in the second step, catalyzed by the large alpha subunit of AS (TrpE) to produce anthranilate. In the absence of TrpG, TrpE can synthesize anthranilate directly from chorismate and high concentrations of ammonia. This chain is Anthranilate synthase component 2 (trpG), found in Buchnera aphidicola subsp. Acyrthosiphon pisum (strain APS) (Acyrthosiphon pisum symbiotic bacterium).